We begin with the raw amino-acid sequence, 964 residues long: Phosphoenolpyruvate carboxylase (964 aa).

S11 is modified (phosphoserine). Active-site residues include H172 and K600.

Belongs to the PEPCase type 1 family. In terms of assembly, homotetramer. It depends on Mg(2+) as a cofactor.

Its subcellular location is the cytoplasm. The catalysed reaction is oxaloacetate + phosphate = phosphoenolpyruvate + hydrogencarbonate. Its pathway is photosynthesis; C4 acid pathway. By light-reversible phosphorylation. Functionally, through the carboxylation of phosphoenolpyruvate (PEP) it forms oxaloacetate, a four-carbon dicarboxylic acid source for the tricarboxylic acid cycle. This Nicotiana tabacum (Common tobacco) protein is Phosphoenolpyruvate carboxylase (PPC).